A 104-amino-acid chain; its full sequence is Flagellar hook-basal body complex protein FliE (104 aa).

The protein belongs to the FliE family.

The protein localises to the bacterial flagellum basal body. This Escherichia coli (strain 55989 / EAEC) protein is Flagellar hook-basal body complex protein FliE.